Consider the following 466-residue polypeptide: Putative ABC transporter ATP-binding protein MG065 (466 aa).

In terms of domain architecture, ABC transporter spans 233 to 463 (IELKNVYKYI…NLNPKQVEEI (231 aa)). 269 to 276 (GPSGSGKT) serves as a coordination point for ATP.

It belongs to the ABC transporter superfamily.

This is Putative ABC transporter ATP-binding protein MG065 from Mycoplasma genitalium (strain ATCC 33530 / DSM 19775 / NCTC 10195 / G37) (Mycoplasmoides genitalium).